A 1056-amino-acid chain; its full sequence is Pleckstrin homology domain-containing family M member 1 (1056 aa).

Residues threonine 41–alanine 183 form the RUN domain. Disordered stretches follow at residues glutamine 215–glutamine 245, glycine 277–aspartate 303, and proline 360–aspartate 422. Serine 219 bears the Phosphoserine mark. A compositionally biased stretch (polar residues) spans proline 389 to glutamate 404. Phosphoserine occurs at positions 432 and 435. The tract at residues serine 451 to glutamine 483 is disordered. Serine 490 is subject to Phosphoserine. In terms of domain architecture, PH 1 spans glycine 534–glutamine 625. Residues glutamate 632–valine 638 carry the LIR motif. An interaction with RAB7A region spans residues cysteine 654 to alanine 1056. In terms of domain architecture, PH 2 spans aspartate 683 to alanine 777. Residues glutamine 986 to cysteine 1040 form a Phorbol-ester/DAG-type zinc finger.

In terms of assembly, interacts (via N- and C-terminus) with RAB7A (GTP-bound form). Simultaneously interacts with RAB7A and ARL8B; bringing about clustering and fusion of late endosomes and lysosomes. Interacts (via RUN domain) with ARL8B (GTP-bound form); the interaction is required for PLEKHM1 localization to lysosomes and for ARL8B function in delivery and degradation of endocytic and autophagic cargo in lysosomes. PLEKHM1 and PLEKHM2 compete for interaction with ARL8B. Interacts with ARL8A; the interaction is weaker than with ARL8B. Interacts with VPS41, VPS11, VPS18, VPS33A and VPS39; indicative for an association with the HOPS complex; the interactions with, at least, VPS41, VPS11, VPS18 and VPS33A require ARL8B. Interacts with GABARAP, GABARAPL, GABARAPL2, MAP1LC3A, MAP1LC3B and MAP1LC3C. Interacts with PAFAH1B. Interacts (via N- and C-terminus) with NDEL1. Interacts (via C-terminus) with MAP3K7. Interacts (via N- and C-terminus) with FAM98A. Interacts (via C-terminus) with DEF8; this interaction is weak but increased in a RAB7A-dependent manner. In colon carcinoma and breast carcinoma cells, it interacts with sialyl-lex-positive protein. (Microbial infection) Interacts with Salmonella typhimurium sifA. Expressed in placenta, liver, prostate, thymus, spleen, ovary, colon, colon carcinoma and peripheral blood lymphocytes (PBL). Weakly expressed in brain, lung, kidney, and testis. No expression in heart, skeletal muscle, pancreas and small intestine. Predominantly expressed in the breast carcinoma cell line MCF-7.

The protein resides in the autolysosome membrane. It localises to the endosome membrane. The protein localises to the late endosome membrane. It is found in the lysosome membrane. Its function is as follows. Acts as a multivalent adapter protein that regulates Rab7-dependent and HOPS complex-dependent fusion events in the endolysosomal system and couples autophagic and the endocytic trafficking pathways. Acts as a dual effector of RAB7A and ARL8B that simultaneously binds these GTPases, bringing about clustering and fusion of late endosomes and lysosomes. Required for late stages of endolysosomal maturation, facilitating both endocytosis-mediated degradation of growth factor receptors and autophagosome clearance. Interaction with Arl8b is a crucial factor in the terminal maturation of autophagosomes and to mediate autophagosome-lysosome fusion. Positively regulates lysosome peripheral distribution and ruffled border formation in osteoclasts. May be involved in negative regulation of endocytic transport from early endosome to late endosome/lysosome implicating its association with Rab7. May have a role in sialyl-lex-mediated transduction of apoptotic signals. Involved in bone resorption. Functionally, (Microbial infection) In case of infection contributes to Salmonella typhimurium pathogenesis by supporting the integrity of the Salmonella-containing vacuole (SCV) probably in concert with the HOPS complex and Rab7. The polypeptide is Pleckstrin homology domain-containing family M member 1 (Homo sapiens (Human)).